Consider the following 548-residue polypeptide: T-complex protein 1 subunit alpha (548 aa).

This sequence belongs to the TCP-1 chaperonin family. As to quaternary structure, heterooligomeric complex of about 850 to 900 kDa that forms two stacked rings, 12 to 16 nm in diameter.

The protein localises to the cytoplasm. Functionally, molecular chaperone; assists the folding of proteins upon ATP hydrolysis. Known to play a role, in vitro, in the folding of actin and tubulin. This Dictyostelium discoideum (Social amoeba) protein is T-complex protein 1 subunit alpha (tcp1).